Here is a 546-residue protein sequence, read N- to C-terminus: Glucose-6-phosphate isomerase 1 (546 aa).

The active-site Proton donor is Glu353. Active-site residues include His384 and Lys512.

Belongs to the GPI family.

The protein localises to the cytoplasm. It catalyses the reaction alpha-D-glucose 6-phosphate = beta-D-fructose 6-phosphate. It functions in the pathway carbohydrate biosynthesis; gluconeogenesis. It participates in carbohydrate degradation; glycolysis; D-glyceraldehyde 3-phosphate and glycerone phosphate from D-glucose: step 2/4. Catalyzes the reversible isomerization of glucose-6-phosphate to fructose-6-phosphate. The polypeptide is Glucose-6-phosphate isomerase 1 (Colwellia psychrerythraea (strain 34H / ATCC BAA-681) (Vibrio psychroerythus)).